A 233-amino-acid chain; its full sequence is Forkhead box protein L3 (233 aa).

Residues 32 to 130 constitute a DNA-binding region (fork-head); the sequence is RPAYSYIALI…ENGNYRRRRR (99 aa). Residues 125-134 are compositionally biased toward basic residues; it reads YRRRRRRRGP. Residues 125 to 198 form a disordered region; sequence YRRRRRRRGP…PRDLKFSIDY (74 aa). Residues 175–184 are compositionally biased toward pro residues; that stretch reads REPPASPAPP. Residues 185–194 show a composition bias toward basic and acidic residues; the sequence is GKEHPRDLKF.

It is found in the nucleus. Its function is as follows. Probable transcriptional regulator. The polypeptide is Forkhead box protein L3 (Homo sapiens (Human)).